The chain runs to 536 residues: Glutamate--tRNA ligase, mitochondrial (536 aa).

L-glutamate is bound at residue 48–50 (RFA). Residues 53 to 61 (PTGFLHLGS) carry the 'HIGH' region motif. H58 contributes to the ATP binding site. L-glutamate contacts are provided by residues E84, 235-239 (YHLAN), and R253. Residues E256 and 291–295 (KLSKR) each bind ATP. Residues 291-295 (KLSKR) carry the 'KMSKS' region motif.

Belongs to the class-I aminoacyl-tRNA synthetase family. Glutamate--tRNA ligase type 1 subfamily.

The protein resides in the mitochondrion matrix. The catalysed reaction is tRNA(Glu) + L-glutamate + ATP = L-glutamyl-tRNA(Glu) + AMP + diphosphate. In terms of biological role, catalyzes the attachment of glutamate to tRNA(Glu) in a two-step reaction: glutamate is first activated by ATP to form Glu-AMP and then transferred to the acceptor end of tRNA(Glu). In Saccharomyces cerevisiae (strain ATCC 204508 / S288c) (Baker's yeast), this protein is Glutamate--tRNA ligase, mitochondrial (MSE1).